Consider the following 21-residue polypeptide: DDKCSIGCKGSATAPTFLNGH.

In terms of tissue distribution, expressed in hemolymph.

The protein resides in the secreted. Constitutes the major component of lipophorin, which mediates transport for various types of lipids in hemolymph. Acts by forming lipoprotein particles that bind lipoproteins and lipids. The sequence is that of Apolipophorin 2 from Galleria mellonella (Greater wax moth).